The following is a 176-amino-acid chain: MDLPGLIHDFLLVFLGLGLILGGLGVVLLTNPIYSAFSLGLVLVCISLFYILSNSHFVAAAQLLIYVGAINVLIIFAVMFMNGSEYYKDFNLWTVGSGVTSLVCTSIFVSLITIIPDTSWYGIIWTTKTNQIIEQDLISNGQQIGIHLSTDFFLPFEFISIILLVALIGAIAVARQ.

5 helical membrane-spanning segments follow: residues 10 to 30 (FLLVFLGLGLILGGLGVVLLT), 32 to 52 (PIYSAFSLGLVLVCISLFYIL), 61 to 81 (AQLLIYVGAINVLIIFAVMFM), 95 to 115 (VGSGVTSLVCTSIFVSLITII), and 152 to 172 (FFLPFEFISIILLVALIGAIA).

This sequence belongs to the complex I subunit 6 family. In terms of assembly, NDH is composed of at least 16 different subunits, 5 of which are encoded in the nucleus.

Its subcellular location is the plastid. It localises to the chloroplast thylakoid membrane. The catalysed reaction is a plastoquinone + NADH + (n+1) H(+)(in) = a plastoquinol + NAD(+) + n H(+)(out). The enzyme catalyses a plastoquinone + NADPH + (n+1) H(+)(in) = a plastoquinol + NADP(+) + n H(+)(out). In terms of biological role, NDH shuttles electrons from NAD(P)H:plastoquinone, via FMN and iron-sulfur (Fe-S) centers, to quinones in the photosynthetic chain and possibly in a chloroplast respiratory chain. The immediate electron acceptor for the enzyme in this species is believed to be plastoquinone. Couples the redox reaction to proton translocation, and thus conserves the redox energy in a proton gradient. In Manihot esculenta (Cassava), this protein is NAD(P)H-quinone oxidoreductase subunit 6, chloroplastic (ndhG).